Consider the following 256-residue polypeptide: Trypsin alpha (256 aa).

An N-terminal signal peptide occupies residues 1-22 (MLKIVILLSAVVCALGGTVPEG). Positions 23-30 (LLPQLDGR) are cleaved as a propeptide — activation peptide. The region spanning 31–254 (IVGGSATTIS…LRSWVVSTAN (224 aa)) is the Peptidase S1 domain. Cys-56 and Cys-72 form a disulfide bridge. Catalysis depends on charge relay system residues His-71 and Asp-116. Cystine bridges form between Cys-180/Cys-197 and Cys-206/Cys-230. Ser-210 acts as the Charge relay system in catalysis.

The protein belongs to the peptidase S1 family. In terms of tissue distribution, synthesized in the midgut of both larvae and adults, primarily in the ventriculus and gastric caeca.

The protein localises to the secreted. Its subcellular location is the extracellular space. It carries out the reaction Preferential cleavage: Arg-|-Xaa, Lys-|-Xaa.. The sequence is that of Trypsin alpha (alphaTry) from Drosophila melanogaster (Fruit fly).